The following is a 142-amino-acid chain: Small ribosomal subunit protein uS12 (142 aa).

A disordered region spans residues 1–44; sequence MTNGKYAARKLKKDRQQRRWSDSEYARRERGLGKKSDPLEGAPQ. Basic residues predominate over residues 7–16; that stretch reads AARKLKKDRQ. A compositionally biased stretch (basic and acidic residues) spans 17 to 38; the sequence is QRRWSDSEYARRERGLGKKSDP.

It belongs to the universal ribosomal protein uS12 family. Part of the 30S ribosomal subunit.

Functionally, with S4 and S5 plays an important role in translational accuracy. Located at the interface of the 30S and 50S subunits. This chain is Small ribosomal subunit protein uS12, found in Halobacterium salinarum (strain ATCC 29341 / DSM 671 / R1).